The following is a 372-amino-acid chain: Queuine tRNA-ribosyltransferase (372 aa).

The active-site Proton acceptor is the aspartate 92. Residues 92 to 96, aspartate 146, glutamine 188, and glycine 215 each bind substrate; that span reads DSGGY. The segment at 246–252 is RNA binding; it reads GIGSLKE. The active-site Nucleophile is aspartate 265. The tract at residues 270–274 is RNA binding; important for wobble base 34 recognition; sequence TRLGR. The Zn(2+) site is built by cysteine 303, cysteine 305, cysteine 308, and histidine 334.

The protein belongs to the queuine tRNA-ribosyltransferase family. In terms of assembly, homodimer. Within each dimer, one monomer is responsible for RNA recognition and catalysis, while the other monomer binds to the replacement base PreQ1. Requires Zn(2+) as cofactor.

The enzyme catalyses 7-aminomethyl-7-carbaguanine + guanosine(34) in tRNA = 7-aminomethyl-7-carbaguanosine(34) in tRNA + guanine. It participates in tRNA modification; tRNA-queuosine biosynthesis. Its function is as follows. Catalyzes the base-exchange of a guanine (G) residue with the queuine precursor 7-aminomethyl-7-deazaguanine (PreQ1) at position 34 (anticodon wobble position) in tRNAs with GU(N) anticodons (tRNA-Asp, -Asn, -His and -Tyr). Catalysis occurs through a double-displacement mechanism. The nucleophile active site attacks the C1' of nucleotide 34 to detach the guanine base from the RNA, forming a covalent enzyme-RNA intermediate. The proton acceptor active site deprotonates the incoming PreQ1, allowing a nucleophilic attack on the C1' of the ribose to form the product. After dissociation, two additional enzymatic reactions on the tRNA convert PreQ1 to queuine (Q), resulting in the hypermodified nucleoside queuosine (7-(((4,5-cis-dihydroxy-2-cyclopenten-1-yl)amino)methyl)-7-deazaguanosine). This Prochlorococcus marinus (strain MIT 9515) protein is Queuine tRNA-ribosyltransferase.